We begin with the raw amino-acid sequence, 361 residues long: Ankyrin repeat domain-containing protein 16 (361 aa).

9 ANK repeats span residues 36-66 (AGDTLLHCAARHGRQDILAYLVEAWSMDIEA), 70-99 (DYKRPLHEAASMGHRDCVRYLLGRGAVVDS), 103-132 (ADWTPLMMACTRKNLDVIQDLVEHGANPLL), 136-165 (DGWNSFHIASREGHPVILRYLLTVCPDAWK), 170-200 (IRRTPLHTAAMHGCLEAVQVLLERCHYEPDC), 204-233 (CGVTPFMDAIQCGHVSIAKLLLEQHKACSS), 238-268 (MGAQALHRAAVTGQDEAIRFLVCGLGIDVDV), 273-302 (SQLTALHYAAKEGQTNTVQTLLSLGADINS), and 306-335 (RNRSVLHLACAGQHVACTRLLLQSGLKDSE).

In terms of assembly, interacts with AARS; the interaction is direct. As to expression, widely expressed in brain (at protein level).

The protein localises to the cytoplasm. The protein resides in the nucleus. Required to prevent the misactivation of serine (Ser) with tRNA(Ala) by promoting the hydrolysis of Ser-mischarged tRNA(Ala), thereby playing a role in translational fidelity. Binds directly to the catalytic domain of AARS/AlaRS and captures Ser that is misactivated by AARS/AlaRS, preventing the charging of Ser adenylates to tRNA(Ala) and precluding Ser misincorporation in nascent peptides. This Mus musculus (Mouse) protein is Ankyrin repeat domain-containing protein 16.